A 30-amino-acid chain; its full sequence is Snake venom serine protease (30 aa).

The Peptidase S1 domain occupies 1-30 (VIGGDECNINEHRFLVALYDPDGFLSGGIL).

This sequence belongs to the peptidase S1 family. Snake venom subfamily. As to quaternary structure, monomer. N-Glycosylated. Expressed by the venom gland.

The protein localises to the secreted. With respect to regulation, inhibited by diisopropylfluorophosphate (DFP). Functionally, snake venom serine protease that catalyzes the hydrolysis of arginine esters, kallikrein substrates Pro-Phe-Arg-MCA and Z-Phe-Arg-MCA. Cleaves kininogen analogs to release bradykinin. Induces contraction of the isolated rat uterus directly at high concentrations, but provokes more forceful contractions when injected in presence of bovine plasma. Shows capillary permeability-increasing activity and hypotensive activity on the anesthetized rat. This Crotalus viridis viridis (Prairie rattlesnake) protein is Snake venom serine protease.